Here is a 156-residue protein sequence, read N- to C-terminus: ATP synthase subunit b (156 aa).

A helical membrane pass occupies residues 12 to 32; sequence VAFLIFVLFCMKYVWPPVITA.

This sequence belongs to the ATPase B chain family. As to quaternary structure, F-type ATPases have 2 components, F(1) - the catalytic core - and F(0) - the membrane proton channel. F(1) has five subunits: alpha(3), beta(3), gamma(1), delta(1), epsilon(1). F(0) has three main subunits: a(1), b(2) and c(10-14). The alpha and beta chains form an alternating ring which encloses part of the gamma chain. F(1) is attached to F(0) by a central stalk formed by the gamma and epsilon chains, while a peripheral stalk is formed by the delta and b chains.

It localises to the cell inner membrane. Its function is as follows. F(1)F(0) ATP synthase produces ATP from ADP in the presence of a proton or sodium gradient. F-type ATPases consist of two structural domains, F(1) containing the extramembraneous catalytic core and F(0) containing the membrane proton channel, linked together by a central stalk and a peripheral stalk. During catalysis, ATP synthesis in the catalytic domain of F(1) is coupled via a rotary mechanism of the central stalk subunits to proton translocation. Component of the F(0) channel, it forms part of the peripheral stalk, linking F(1) to F(0). This is ATP synthase subunit b from Pseudomonas putida (strain GB-1).